The sequence spans 378 residues: Outer membrane protein (378 aa).

Positions 1–22 are cleaved as a signal peptide; it reads MRLRTALLATTLMAAAPVAANA. In terms of domain architecture, OmpA-like spans 258 to 378; it reads PPAPTPARTY…QNRRVEIILH (121 aa).

It localises to the cell outer membrane. Functionally, growth enhancer. This Gluconacetobacter diazotrophicus (strain ATCC 49037 / DSM 5601 / CCUG 37298 / CIP 103539 / LMG 7603 / PAl5) protein is Outer membrane protein.